Reading from the N-terminus, the 354-residue chain is AT-hook motif nuclear-localized protein 11 (354 aa).

2 disordered regions span residues 1 to 158 (MDRR…MMPS) and 290 to 354 (KREE…LMRG). 2 stretches are compositionally biased toward low complexity: residues 46–55 (NSISPFGSNP) and 75–96 (VDSSPADSSAAAAGALVAPPSG). The short motif at 101-109 (KRKRGRPRK) is the Bipartite nuclear localization signal element. Positions 101-113 (KRKRGRPRKYGQD) form a DNA-binding region, a.T hook 1. Low complexity predominate over residues 122 to 133 (SPSISNVSPNSN). A DNA-binding region (a.T hook 2) is located at residues 134-146 (KRGRGRPPGSGKK). Residues 159-302 (STGMSFTPHV…ETSEDVQDTD (144 aa)) form the PPC domain. Acidic residues predominate over residues 294–303 (TSEDVQDTDA). Polar residues predominate over residues 304-327 (LENNNDNTAATSPPVPQQSQNIVQ). A compositionally biased stretch (basic and acidic residues) spans 340-354 (MDMHHPHMDIDLMRG).

It localises to the nucleus. Transcription factor that specifically binds AT-rich DNA sequences related to the nuclear matrix attachment regions (MARs). This Arabidopsis thaliana (Mouse-ear cress) protein is AT-hook motif nuclear-localized protein 11.